We begin with the raw amino-acid sequence, 360 residues long: MIIWLAELLQPYFSFFRLFEYLSFRAIVSILTALGISLWMGPRMIKRLQMLQIGQVVRNEGPESHFSKRGTPTMGGVMILAAITITVLLWADLTNPYVWAVLAVLLGYGAVGFVDDYRKVVRKNTDGLIARWKYFWQSAIALVVAFALYAHGQDTAATQLVVPFFKDVMPQLGLMYIVLTYFVIVGTSNAVNLTDGLDGLAIMPTVLVAAGFAAIAWATGNVNFANYLHIPYIPHSSELVVVCTAMVGAGLGFLWFNTYPAQVFMGDVGALALGGALGTIAVLVRQEFVLVIMGGVFVMETLSVILQVGSYKLRGQRIFRMAPIHHHYELKGWPEPRVIVRFWIISIVLVLIGLATLKVR.

The next 10 helical transmembrane spans lie at 21–41, 73–93, 94–114, 132–152, 168–188, 199–219, 239–259, 263–283, 288–308, and 338–358; these read YLSF…LWMG, TMGG…WADL, TNPY…VGFV, WKYF…YAHG, VMPQ…VGTS, GLAI…AWAT, LVVV…FNTY, VFMG…IAVL, FVLV…ILQV, and VIVR…ATLK.

The protein belongs to the glycosyltransferase 4 family. MraY subfamily. It depends on Mg(2+) as a cofactor.

The protein resides in the cell inner membrane. It catalyses the reaction UDP-N-acetyl-alpha-D-muramoyl-L-alanyl-gamma-D-glutamyl-meso-2,6-diaminopimeloyl-D-alanyl-D-alanine + di-trans,octa-cis-undecaprenyl phosphate = di-trans,octa-cis-undecaprenyl diphospho-N-acetyl-alpha-D-muramoyl-L-alanyl-D-glutamyl-meso-2,6-diaminopimeloyl-D-alanyl-D-alanine + UMP. Its pathway is cell wall biogenesis; peptidoglycan biosynthesis. Its function is as follows. Catalyzes the initial step of the lipid cycle reactions in the biosynthesis of the cell wall peptidoglycan: transfers peptidoglycan precursor phospho-MurNAc-pentapeptide from UDP-MurNAc-pentapeptide onto the lipid carrier undecaprenyl phosphate, yielding undecaprenyl-pyrophosphoryl-MurNAc-pentapeptide, known as lipid I. This is Phospho-N-acetylmuramoyl-pentapeptide-transferase from Vibrio cholerae serotype O1 (strain M66-2).